The chain runs to 1183 residues: Rab11 family-interacting protein 3 (1183 aa).

Residues 423 to 448 are disordered; sequence AEDPSTESLPRKNGQEESKSALPVST. Over residues 431–441 the composition is skewed to basic and acidic residues; the sequence is LPRKNGQEESK. EF-hand domains are found at residues 706 to 741 and 738 to 773; these read EEQSALRAVFQALDQDGDGFVHIEEFIEFAKAYGAE and YGAEQVKDLTRFLDPSGLGVISFEDFHRGISAISNE. Positions 719, 721, 723, 730, 751, 753, and 762 each coordinate Ca(2+). The stretch at 902–1121 forms a coiled coil; that stretch reads ELEKDSLESE…NGQIINLSIQ (220 aa). The interval 911–1015 is ARF-binding domain (ABD); sequence EEQHARLRQE…LQDEADDITQ (105 aa). The tract at residues 1005–1044 is disordered; sequence KLQDEADDITQRLNEESESRRKMSDKLSHERHTNQKEKEC. The FIP-RBD domain occupies 1121–1183; it reads QGAKSLFTES…ESNPSILEVK (63 aa).

It localises to the recycling endosome membrane. Its subcellular location is the cytoplasm. The protein resides in the cytoskeleton. The protein localises to the microtubule organizing center. It is found in the centrosome. It localises to the cleavage furrow. Its subcellular location is the midbody. The protein resides in the golgi apparatus membrane. The protein localises to the golgi apparatus. It is found in the trans-Golgi network membrane. Its function is as follows. Downstream effector molecule for Rab11 GTPase which acts as a regulator of endocytic trafficking, cytokinesis and intracellular ciliogenesis by participating in membrane delivery. This Danio rerio (Zebrafish) protein is Rab11 family-interacting protein 3 (rab11fip3).